Consider the following 195-residue polypeptide: Peptidyl-tRNA hydrolase (195 aa).

Residue tyrosine 17 coordinates tRNA. The active-site Proton acceptor is histidine 22. Residues tyrosine 68, asparagine 70, and asparagine 116 each contribute to the tRNA site.

The protein belongs to the PTH family. Monomer.

The protein localises to the cytoplasm. It catalyses the reaction an N-acyl-L-alpha-aminoacyl-tRNA + H2O = an N-acyl-L-amino acid + a tRNA + H(+). In terms of biological role, hydrolyzes ribosome-free peptidyl-tRNAs (with 1 or more amino acids incorporated), which drop off the ribosome during protein synthesis, or as a result of ribosome stalling. Catalyzes the release of premature peptidyl moieties from peptidyl-tRNA molecules trapped in stalled 50S ribosomal subunits, and thus maintains levels of free tRNAs and 50S ribosomes. The chain is Peptidyl-tRNA hydrolase from Shewanella sp. (strain ANA-3).